The primary structure comprises 267 residues: Indole-3-glycerol phosphate synthase (267 aa).

The protein belongs to the TrpC family.

It catalyses the reaction 1-(2-carboxyphenylamino)-1-deoxy-D-ribulose 5-phosphate + H(+) = (1S,2R)-1-C-(indol-3-yl)glycerol 3-phosphate + CO2 + H2O. The protein operates within amino-acid biosynthesis; L-tryptophan biosynthesis; L-tryptophan from chorismate: step 4/5. This chain is Indole-3-glycerol phosphate synthase, found in Deinococcus radiodurans (strain ATCC 13939 / DSM 20539 / JCM 16871 / CCUG 27074 / LMG 4051 / NBRC 15346 / NCIMB 9279 / VKM B-1422 / R1).